The sequence spans 349 residues: tRNA pseudouridine synthase D (349 aa).

Residue phenylalanine 27 participates in substrate binding. The Nucleophile role is filled by aspartate 80. Asparagine 129 provides a ligand contact to substrate. The 149-residue stretch at 155–303 folds into the TRUD domain; sequence GVPNYFGAQR…VEAARRAMLL (149 aa). Substrate is bound at residue phenylalanine 329.

This sequence belongs to the pseudouridine synthase TruD family.

The enzyme catalyses uridine(13) in tRNA = pseudouridine(13) in tRNA. Responsible for synthesis of pseudouridine from uracil-13 in transfer RNAs. The sequence is that of tRNA pseudouridine synthase D from Enterobacter sp. (strain 638).